The chain runs to 200 residues: WUSCHEL-related homeobox 9 (200 aa).

The homeobox; WUS-type DNA-binding region spans 10–74; sequence VKCGRWNPTA…NHKARERHHH (65 aa). A compositionally biased stretch (basic residues) spans 70–80; that stretch reads ERHHHKKRRRG. The interval 70–118 is disordered; sequence ERHHHKKRRRGASSPDSGSNDDDGRAAAHEGDADLVLQPPESKREARSY. The span at 91 to 101 shows a compositional bias: basic and acidic residues; the sequence is DDGRAAAHEGD.

This sequence belongs to the WUS homeobox family. Specifically expressed in the central cells of the quiescent center (QC) of the root.

The protein resides in the nucleus. In terms of biological role, transcription factor which may be involved in the specification and maintenance of the stem cells (QC cells) in the root apical meristem (RAM). The polypeptide is WUSCHEL-related homeobox 9 (WOX9) (Oryza sativa subsp. japonica (Rice)).